A 310-amino-acid polypeptide reads, in one-letter code: Beta sliding clamp (310 aa).

Belongs to the beta sliding clamp family. As to quaternary structure, forms a ring-shaped head-to-tail homodimer around DNA which binds and tethers DNA polymerases and other proteins to the DNA. The DNA replisome complex has a single clamp-loading complex (3 tau and 1 each of delta, delta', psi and chi subunits) which binds 3 Pol III cores (1 core on the leading strand and 2 on the lagging strand) each with a beta sliding clamp dimer. Additional proteins in the replisome are other copies of gamma, psi and chi, Ssb, DNA helicase and RNA primase.

It localises to the cytoplasm. Confers DNA tethering and processivity to DNA polymerases and other proteins. Acts as a clamp, forming a ring around DNA (a reaction catalyzed by the clamp-loading complex) which diffuses in an ATP-independent manner freely and bidirectionally along dsDNA. Initially characterized for its ability to contact the catalytic subunit of DNA polymerase III (Pol III), a complex, multichain enzyme responsible for most of the replicative synthesis in bacteria; Pol III exhibits 3'-5' exonuclease proofreading activity. The beta chain is required for initiation of replication as well as for processivity of DNA replication. The chain is Beta sliding clamp (dnaN) from Micrococcus luteus (Micrococcus lysodeikticus).